Here is a 179-residue protein sequence, read N- to C-terminus: uncharacterized protein (179 aa).

The disordered stretch occupies residues 1-32 (MELQGAQEDLGISLSSPRRNHETRPGSKAKGR).

This is an uncharacterized protein from Homo sapiens (Human).